The sequence spans 412 residues: Arginine biosynthesis bifunctional protein ArgJ (412 aa).

Positions 158, 184, 195, 284, 407, and 412 each coordinate substrate. Threonine 195 functions as the Nucleophile in the catalytic mechanism.

It belongs to the ArgJ family. Heterotetramer of two alpha and two beta chains.

Its subcellular location is the cytoplasm. It catalyses the reaction N(2)-acetyl-L-ornithine + L-glutamate = N-acetyl-L-glutamate + L-ornithine. The enzyme catalyses L-glutamate + acetyl-CoA = N-acetyl-L-glutamate + CoA + H(+). It participates in amino-acid biosynthesis; L-arginine biosynthesis; L-ornithine and N-acetyl-L-glutamate from L-glutamate and N(2)-acetyl-L-ornithine (cyclic): step 1/1. Its pathway is amino-acid biosynthesis; L-arginine biosynthesis; N(2)-acetyl-L-ornithine from L-glutamate: step 1/4. Its function is as follows. Catalyzes two activities which are involved in the cyclic version of arginine biosynthesis: the synthesis of N-acetylglutamate from glutamate and acetyl-CoA as the acetyl donor, and of ornithine by transacetylation between N(2)-acetylornithine and glutamate. The polypeptide is Arginine biosynthesis bifunctional protein ArgJ (Bartonella quintana (strain Toulouse) (Rochalimaea quintana)).